The sequence spans 210 residues: Imidazoleglycerol-phosphate dehydratase (210 aa).

It belongs to the imidazoleglycerol-phosphate dehydratase family.

The protein resides in the cytoplasm. The catalysed reaction is D-erythro-1-(imidazol-4-yl)glycerol 3-phosphate = 3-(imidazol-4-yl)-2-oxopropyl phosphate + H2O. Its pathway is amino-acid biosynthesis; L-histidine biosynthesis; L-histidine from 5-phospho-alpha-D-ribose 1-diphosphate: step 6/9. The polypeptide is Imidazoleglycerol-phosphate dehydratase (Acidovorax ebreus (strain TPSY) (Diaphorobacter sp. (strain TPSY))).